Here is a 1347-residue protein sequence, read N- to C-terminus: Protocadherin-11 X-linked (1347 aa).

Residues 1–23 form the signal peptide; the sequence is MDLLSGTYIFAVLLACVVFHSGA. The Extracellular portion of the chain corresponds to 24–812; the sequence is QEKNYTIREE…VSSPTSDYVK (789 aa). Cadherin domains lie at 26–139, 140–249, 250–355, 362–466, 467–570, 571–673, and 677–795; these read KNYT…APLF, PATV…HPVF, KETE…VPSI, NPVN…APVF, TQSF…SPVF, THNE…KPVF, and PSNC…APVT. 3 N-linked (GlcNAc...) asparagine glycosylation sites follow: Asn27, Asn48, and Asn54. N-linked (GlcNAc...) asparagine glycosylation is present at Asn344. Asn553 carries N-linked (GlcNAc...) asparagine glycosylation. Asn773 is a glycosylation site (N-linked (GlcNAc...) asparagine). Residues 813–833 form a helical membrane-spanning segment; it reads ILVAAVAGTITVVVVIFITAV. The Cytoplasmic portion of the chain corresponds to 834 to 1347; that stretch reads VRCRQAPHLK…DSPIMEEHPL (514 aa). 3 disordered regions span residues 1057–1091, 1097–1116, and 1326–1347; these read LPEGSQESSSDGGLGDHDAGSLTSTSHGLPLGYPQ, RATPSNRTEGDGNSDPESTF, and FTPRQQARPSRGDSPIMEEHPL.

In terms of tissue distribution, expressed strongly in fetal brain and brain (cortex, amygdala, thalamus, substantia nigra, hippocampus, caudate nucleus and corpus callosum). Expressed at low level in testis.

The protein localises to the cell membrane. Its function is as follows. Potential calcium-dependent cell-adhesion protein. The sequence is that of Protocadherin-11 X-linked (PCDH11X) from Homo sapiens (Human).